Here is a 147-residue protein sequence, read N- to C-terminus: Probable disulfide formation protein (147 aa).

A helical membrane pass occupies residues 9 to 28 (NYSLYFAWLTALIATLGSLY). An intrachain disulfide couples Cys38 to Cys41. 2 helical membrane passes run 43 to 62 (YQRV…AYRT) and 69 to 86 (YALP…YQYL). Cys99 and Cys106 are joined by a disulfide. The chain crosses the membrane as a helical span at residues 115-138 (GFITLPFLGMLATLIMSFFLIMAF).

The protein belongs to the DsbB family. BdbC subfamily.

The protein localises to the cell inner membrane. Its function is as follows. Required for disulfide bond formation in some proteins. The protein is Probable disulfide formation protein of Coxiella burnetii (strain CbuK_Q154) (Coxiella burnetii (strain Q154)).